The primary structure comprises 186 residues: Elongation factor P (186 aa).

The protein belongs to the elongation factor P family.

The protein resides in the cytoplasm. Its pathway is protein biosynthesis; polypeptide chain elongation. Functionally, involved in peptide bond synthesis. Stimulates efficient translation and peptide-bond synthesis on native or reconstituted 70S ribosomes in vitro. Probably functions indirectly by altering the affinity of the ribosome for aminoacyl-tRNA, thus increasing their reactivity as acceptors for peptidyl transferase. The polypeptide is Elongation factor P (Laribacter hongkongensis (strain HLHK9)).